Here is a 391-residue protein sequence, read N- to C-terminus: Calcium-binding and spermatid-specific protein 1 (391 aa).

Disordered stretches follow at residues 1 to 23 (MAED…TPTE), 90 to 110 (PEKE…GSIT), and 152 to 221 (KEVV…KEVT). Positions 90–101 (PEKEITTPTETP) are enriched in low complexity. Phosphoserine occurs at positions 253 and 269. Positions 271–299 (EKAKDNVEDPLNDEESTDGANDWMEKETA) are disordered. The segment covering 278 to 287 (EDPLNDEEST) has biased composition (acidic residues). Phosphoserine occurs at positions 314, 347, 357, 372, and 376. The disordered stretch occupies residues 330–351 (EESHVNTTDLPENETTESVTNV).

As to expression, detected only in testis. Expressed from stages X to VIII of the seminiferous epithelial cycle. Expressed from step 13 to step 16 of spermatid development (at protein level).

The protein localises to the cytoplasm. Its subcellular location is the mitochondrion inner membrane. The protein resides in the cell projection. It is found in the cilium. It localises to the flagellum. The protein localises to the cytoplasmic vesicle. Its subcellular location is the secretory vesicle. The protein resides in the acrosome. Calcium-binding protein. Essential for maintaining the structural integrity of the sperm flagella. The sequence is that of Calcium-binding and spermatid-specific protein 1 (Cabs1) from Mus musculus (Mouse).